Consider the following 241-residue polypeptide: Uracil-DNA glycosylase (241 aa).

Residue Asp-71 is the Proton acceptor of the active site.

The protein belongs to the uracil-DNA glycosylase (UDG) superfamily. UNG family.

It localises to the cytoplasm. The enzyme catalyses Hydrolyzes single-stranded DNA or mismatched double-stranded DNA and polynucleotides, releasing free uracil.. In terms of biological role, excises uracil residues from the DNA which can arise as a result of misincorporation of dUMP residues by DNA polymerase or due to deamination of cytosine. The protein is Uracil-DNA glycosylase of Xanthomonas axonopodis pv. citri (strain 306).